Reading from the N-terminus, the 92-residue chain is Small ribosomal subunit protein uS19 (92 aa).

The protein belongs to the universal ribosomal protein uS19 family.

Protein S19 forms a complex with S13 that binds strongly to the 16S ribosomal RNA. This chain is Small ribosomal subunit protein uS19, found in Sulfurovum sp. (strain NBC37-1).